The primary structure comprises 1045 residues: Translation initiation factor IF-2 (1045 aa).

2 disordered regions span residues Met1–Pro169 and Gln184–Pro451. Positions Ser83–Ser94 are enriched in gly residues. A compositionally biased stretch (basic and acidic residues) spans Arg103–Glu123. Residues Ala124–Ala151 show a composition bias toward low complexity. Positions Pro152–Ala163 are enriched in pro residues. The segment covering Gln184–Ala199 has biased composition (low complexity). 2 stretches are compositionally biased toward basic and acidic residues: residues Glu227 to Ser237 and Arg302 to Gly323. Over residues Arg338–Gly348 the composition is skewed to pro residues. Positions Gly352–Ala363 are enriched in low complexity. Composition is skewed to basic and acidic residues over residues Val381–Lys393 and Arg438–Gly450. The region spanning Pro540–Lys710 is the tr-type G domain. Residues Gly549–Thr556 are G1. Gly549–Thr556 serves as a coordination point for GTP. The G2 stretch occupies residues Gly574–His578. The tract at residues Asp596–Gly599 is G3. Residues Asp596 to His600 and Asn650 to Asp653 contribute to the GTP site. Residues Asn650 to Asp653 form a G4 region. The G5 stretch occupies residues Ser686–Lys688.

This sequence belongs to the TRAFAC class translation factor GTPase superfamily. Classic translation factor GTPase family. IF-2 subfamily.

It is found in the cytoplasm. In terms of biological role, one of the essential components for the initiation of protein synthesis. Protects formylmethionyl-tRNA from spontaneous hydrolysis and promotes its binding to the 30S ribosomal subunits. Also involved in the hydrolysis of GTP during the formation of the 70S ribosomal complex. The sequence is that of Translation initiation factor IF-2 from Caulobacter sp. (strain K31).